The following is a 248-amino-acid chain: Undecaprenyl-diphosphatase (248 aa).

8 consecutive transmembrane segments (helical) span residues 4–24, 40–60, 74–94, 101–121, 134–154, 174–194, 201–221, and 228–248; these read IVLGLIQGLTEFLPISSSGHL, FAFLHLATLAAIIVFVWKEIV, YSLVLKIIISTIPAAIFGFLF, SFSNLKIISFFFLVTAASLFV, ISYIDALIIGLFQMIAIFPGI, ALKYSFLMGIPVILGAGILET, SYILISGLVAFLSGLLSLLIL, and KKLKIFSYYCILIAIIAFFVG.

Belongs to the UppP family.

Its subcellular location is the cell inner membrane. The enzyme catalyses di-trans,octa-cis-undecaprenyl diphosphate + H2O = di-trans,octa-cis-undecaprenyl phosphate + phosphate + H(+). Its function is as follows. Catalyzes the dephosphorylation of undecaprenyl diphosphate (UPP). Confers resistance to bacitracin. This is Undecaprenyl-diphosphatase from Thermosipho africanus (strain TCF52B).